A 25-amino-acid polypeptide reads, in one-letter code: Retinol-binding protein 3 (25 aa).

The protein localises to the secreted. It localises to the extracellular space. It is found in the extracellular matrix. Its subcellular location is the interphotoreceptor matrix. Its function is as follows. IRBP shuttles 11-cis and all trans retinoids between the retinol isomerase in the pigment epithelium and the visual pigments in the photoreceptor cells of the retina. The protein is Retinol-binding protein 3 (RBP3) of Sus scrofa (Pig).